The chain runs to 705 residues: GATOR2 complex protein WDR24 (705 aa).

6 WD repeats span residues 1–28 (MDEN…RNKQ), 34–74 (EHKR…SVST), 77–117 (GQSE…RYER), 121–161 (AHNG…AKEI), 165–207 (QTIA…IPSA), and 211–254 (EHKD…IDRA). The C4-type zinc finger occupies 633 to 655 (NCSNCKRPMSNRGWICDRCRQCA). C634, C637, C648, C651, C658, C661, C672, C675, H677, H680, H683, C694, C698, H700, and C702 together coordinate Zn(2+). The segment at 656-705 (SMCAVCHHVVKGLFVWCQGCSHGGHLQHIMKWLETSSHCPAGCGHLCEYT) adopts an RING-type; atypical zinc-finger fold.

It belongs to the WD repeat WDR24 family. As to quaternary structure, component of the GATOR2 subcomplex, composed of MIOS, SEC13, SEH1L, WDR24 and WDR59. The GATOR2 complex interacts with CASTOR1 and CASTOR2; the interaction is negatively regulated by arginine. The GATOR2 complex interacts with SESN1, SESN2 and SESN3; the interaction is negatively regulated by amino acids.

The protein localises to the lysosome membrane. The enzyme catalyses S-ubiquitinyl-[E2 ubiquitin-conjugating enzyme]-L-cysteine + [acceptor protein]-L-lysine = [E2 ubiquitin-conjugating enzyme]-L-cysteine + N(6)-ubiquitinyl-[acceptor protein]-L-lysine.. It participates in protein modification; protein ubiquitination. Its activity is regulated as follows. The GATOR2 complex is negatively regulated by the upstream amino acid sensors CASTOR1 and SESN2, which sequester the GATOR2 complex in absence of amino acids. In the presence of abundant amino acids, GATOR2 is released from CASTOR1 and SESN2 and activated. Its function is as follows. Catalytic component of the GATOR2 complex, a multiprotein complex that acts as an activator of the amino acid-sensing branch of the mTORC1 signaling pathway. The GATOR2 complex indirectly activates mTORC1 through the inhibition of the GATOR1 subcomplex. GATOR2 probably acts as an E3 ubiquitin-protein ligase toward GATOR1. In the presence of abundant amino acids, the GATOR2 complex mediates ubiquitination of the NPRL2 core component of the GATOR1 complex, leading to GATOR1 inactivation. In the absence of amino acids, GATOR2 is inhibited, activating the GATOR1 complex. In addition to its role in regulation of the mTORC1 complex, promotes the acidification of lysosomes and facilitates autophagic flux. Within the GATOR2 complex, WDR24 constitutes the catalytic subunit that mediates 'Lys-6'-linked ubiquitination of NPRL2. This Gallus gallus (Chicken) protein is GATOR2 complex protein WDR24.